We begin with the raw amino-acid sequence, 247 residues long: Granulin (247 aa).

It belongs to the polyhedrin family.

Its function is as follows. Component of the virus occlusion bodies, which are large proteinaceous structures, that protect the virus from the outside environment for extended periods until they are ingested by insect larvae. In Agrotis segetum granulosis virus (AsGV), this protein is Granulin.